Reading from the N-terminus, the 99-residue chain is Acylphosphatase-1 (99 aa).

Alanine 2 is subject to N-acetylalanine. An Acylphosphatase-like domain is found at 9–99; sequence SVDYEIFGKV…LDYSDFQIVK (91 aa). Active-site residues include arginine 24 and asparagine 42.

The protein belongs to the acylphosphatase family. In terms of tissue distribution, organ-common type isozyme is found in many different tissues.

The enzyme catalyses an acyl phosphate + H2O = a carboxylate + phosphate + H(+). In Homo sapiens (Human), this protein is Acylphosphatase-1 (ACYP1).